A 323-amino-acid chain; its full sequence is Glyoxylate/hydroxypyruvate reductase B (323 aa).

Residues 37 to 62 are disordered; the sequence is AEHGGAGARRRHDRLQQHGGSSAAGE. Catalysis depends on residues Arg236 and Glu265. Residue His284 is the Proton donor of the active site.

It belongs to the D-isomer specific 2-hydroxyacid dehydrogenase family. GhrB subfamily. Homodimer.

The protein resides in the cytoplasm. It catalyses the reaction glycolate + NADP(+) = glyoxylate + NADPH + H(+). The enzyme catalyses (R)-glycerate + NAD(+) = 3-hydroxypyruvate + NADH + H(+). It carries out the reaction (R)-glycerate + NADP(+) = 3-hydroxypyruvate + NADPH + H(+). Catalyzes the NADPH-dependent reduction of glyoxylate and hydroxypyruvate into glycolate and glycerate, respectively. This chain is Glyoxylate/hydroxypyruvate reductase B (tkrA), found in Enterobacter agglomerans (Erwinia herbicola).